A 540-amino-acid chain; its full sequence is Phosphatidylinositol 4-phosphate 5-kinase type-1 beta (540 aa).

Residues M1–Y21 form a disordered region. Residues A25 to V395 form the PIPK domain. S445, S447, and S448 each carry phosphoserine.

In terms of assembly, interacts with RAC1, AJUBA, PLD1, PLD2 and ARF1. In terms of tissue distribution, detected in heart, pancreas, brain, kidney, skeletal muscle and lung.

The protein localises to the cytoplasm. The protein resides in the cytosol. Its subcellular location is the cell membrane. It localises to the endomembrane system. It carries out the reaction a 1,2-diacyl-sn-glycero-3-phospho-(1D-myo-inositol 4-phosphate) + ATP = a 1,2-diacyl-sn-glycero-3-phospho-(1D-myo-inositol-4,5-bisphosphate) + ADP + H(+). The enzyme catalyses 1-octadecanoyl-2-(5Z,8Z,11Z,14Z)-eicosatetraenoyl-sn-glycero-3-phospho-1D-myo-inositol 4-phosphate + ATP = 1-octadecanoyl-2-(5Z,8Z,11Z,14Z)-eicosatetraenoyl-sn-glycero-3-phospho-1D-myo-inositol 4,5-bisphosphate + ADP + H(+). It catalyses the reaction 1-octadecanoyl-2-(9Z)-octadecenoyl-sn-glycero-3-phospho-1D-myo-inositol 4-phosphate + ATP = 1-octadecanoyl-2-(9Z)-octadecenoyl-sn-glycero-3-phospho-1D-myo-inositol 4,5-bisphosphate + ADP + H(+). The catalysed reaction is 1-octadecanoyl-2-(9Z)-octadecenoyl-sn-glycero-3-phospho-1D-myo-inositol + ATP = 1-octadecanoyl-2-(9Z)-octadecenoyl-sn-glycero-3-phospho-1D-myo-inositol 5-phosphate + ADP + H(+). It carries out the reaction 1-octadecanoyl-2-(9Z,12Z)-octadecadienoyl-sn-glycero-3-phospho-1D-myo-inositol + ATP = 1-octadecanoyl-2-(9Z,12Z)-octadecadienoyl-sn-glycero-3-phospho-1D-myo-inositol 5-phosphate + ADP + H(+). The enzyme catalyses 1-octadecanoyl-2-(5Z,8Z,11Z,14Z-eicosatetraenoyl)-sn-glycero-3-phospho-(1D-myo-inositol) + ATP = 1-octadecanoyl-2-(5Z,8Z,11Z,14Z)-eicosatetraenoyl-sn-glycero-3-phospho-1D-myo-inositol 5-phosphate + ADP + H(+). It catalyses the reaction 1,2-di-(9Z,12Z)-octadecadienoyl-sn-glycero-3-phospho-1D-myo-inositol + ATP = 1,2-di(9Z,12Z)-octadecadienoyl-sn-glycero-3-phospho-1D-myo-inositol 5-phosphate + ADP + H(+). Its function is as follows. Catalyzes the phosphorylation of phosphatidylinositol 4-phosphate (PtdIns(4)P/PI4P) to form phosphatidylinositol 4,5-bisphosphate (PtdIns(4,5)P2/PIP2), a lipid second messenger that regulates several cellular processes such as signal transduction, vesicle trafficking, actin cytoskeleton dynamics, cell adhesion, and cell motility. PtdIns(4,5)P2 can directly act as a second messenger or can be utilized as a precursor to generate other second messengers: inositol 1,4,5-trisphosphate (IP3), diacylglycerol (DAG) or phosphatidylinositol-3,4,5-trisphosphate (PtdIns(3,4,5)P3/PIP3). Mediates RAC1-dependent reorganization of actin filaments. Contributes to the activation of phospholipase PLD2. Together with PIP5K1A, is required, after stimulation by G-protein coupled receptors, for the synthesis of IP3 that will induce stable platelet adhesion. This is Phosphatidylinositol 4-phosphate 5-kinase type-1 beta from Homo sapiens (Human).